The sequence spans 370 residues: Lysophosphatidic acid receptor 4 (370 aa).

Residues 1-43 are Extracellular-facing; it reads MGDRRFIDFQFQDLNSSLRPRLGNATANNTCIVDDSFKYNLNG. Asn-15, Asn-24, and Asn-28 each carry an N-linked (GlcNAc...) asparagine glycan. A helical membrane pass occupies residues 44–64; the sequence is AVYSVVFILGLITNSASLFVF. The Cytoplasmic segment spans residues 65–73; the sequence is CFRMKMRSE. Residues 74-94 form a helical membrane-spanning segment; that stretch reads TAIFITNLALSDLLFVCTLPF. The Extracellular segment spans residues 95–112; that stretch reads KIFYNFNRHWPFGDTLCK. Cys-111 and Cys-188 are joined by a disulfide. Residues 113–133 traverse the membrane as a helical segment; sequence ISGTAFLTNIYGSMLFLTCIS. Topologically, residues 134-155 are cytoplasmic; sequence VDRFLAIVYPFRSRTIRTRRNS. Residues 156–176 form a helical membrane-spanning segment; the sequence is AIVCAGVWILVLSGGISASLF. Over 177–203 the chain is Extracellular; that stretch reads STTNVNNATTTCFEGFSKRVWKTYLSK. Asn-183 is a glycosylation site (N-linked (GlcNAc...) asparagine). A helical membrane pass occupies residues 204-224; sequence ITIFIEVVGFIIPLILNVSCS. The Cytoplasmic portion of the chain corresponds to 225–254; sequence SVVLRTLRKPATLSQIGTNKKKVLKMITVH. A helical membrane pass occupies residues 255–275; sequence MAVFVVCFVPYNSVLFLYALV. The Extracellular portion of the chain corresponds to 276-294; it reads RSQAITNCLLERFAKIMYP. A helical transmembrane segment spans residues 295–315; the sequence is ITLCLATLNCCFDPFIYYFTL. The Cytoplasmic portion of the chain corresponds to 316–370; that stretch reads ESFQKSFYINTHIRMESLFKTETPLTPKPSLPAIQEEVSDQTTNNGGELMLESTF.

It belongs to the G-protein coupled receptor 1 family.

It is found in the cell membrane. Functionally, receptor for lysophosphatidic acid (LPA), a mediator of diverse cellular activities. Transduces a signal by increasing the intracellular calcium ions and by stimulating adenylyl cyclase activity. The rank order of potency for agonists of this receptor is 1-oleoyl- &gt; 1-stearoyl- &gt; 1-palmitoyl- &gt; 1-myristoyl- &gt; 1-alkyl- &gt; 1-alkenyl-LPA. In Mus musculus (Mouse), this protein is Lysophosphatidic acid receptor 4 (Lpar4).